Here is a 282-residue protein sequence, read N- to C-terminus: Homeobox protein vex1 (282 aa).

The homeobox DNA-binding region spans 129–188 (ASRARTKFTAEQLEELEKSFKENRYIGSSEKRRLSKVLKLSENQIKTWFQNRRMKFKRQT).

The protein resides in the nucleus. Transcriptional repressor. Acts in a ventral signaling pathway downstream of bmp4 to antagonize the Spemann organizer and ventrally pattern the embryonic mesoderm. Represses transcription of the dorsal genes gsc and otx2. The polypeptide is Homeobox protein vex1 (Xenopus tropicalis (Western clawed frog)).